Here is a 360-residue protein sequence, read N- to C-terminus: Phospho-N-acetylmuramoyl-pentapeptide-transferase (360 aa).

Helical transmembrane passes span 24–44 (RAVMAALTALAFSLMFGPWTI), 69–89 (GTPTMGGSLILTAITVSTLLW), 92–112 (WANPYIWILLGVLLATGALGF), 133–153 (MVWQSSVAIIAGLALFYLAAN), 158–178 (ILIVPFFKQIALPLGVVGFLV), 199–219 (GLATFPVVLVAAGLAIFAYAS), 239–259 (VVIFCTAMCGACLGFLWFNAY), 263–283 (VFMGDVGALALGAALGTVAVI), 288–308 (FVLVIMGGLFVVEAVSVMLQV), and 337–357 (QVVVRFWIITIVLVLIGLSTL).

The protein belongs to the glycosyltransferase 4 family. MraY subfamily. It depends on Mg(2+) as a cofactor.

Its subcellular location is the cell inner membrane. It catalyses the reaction UDP-N-acetyl-alpha-D-muramoyl-L-alanyl-gamma-D-glutamyl-meso-2,6-diaminopimeloyl-D-alanyl-D-alanine + di-trans,octa-cis-undecaprenyl phosphate = di-trans,octa-cis-undecaprenyl diphospho-N-acetyl-alpha-D-muramoyl-L-alanyl-D-glutamyl-meso-2,6-diaminopimeloyl-D-alanyl-D-alanine + UMP. It participates in cell wall biogenesis; peptidoglycan biosynthesis. Functionally, catalyzes the initial step of the lipid cycle reactions in the biosynthesis of the cell wall peptidoglycan: transfers peptidoglycan precursor phospho-MurNAc-pentapeptide from UDP-MurNAc-pentapeptide onto the lipid carrier undecaprenyl phosphate, yielding undecaprenyl-pyrophosphoryl-MurNAc-pentapeptide, known as lipid I. In Neisseria meningitidis serogroup A / serotype 4A (strain DSM 15465 / Z2491), this protein is Phospho-N-acetylmuramoyl-pentapeptide-transferase.